The primary structure comprises 820 residues: Protein phosphatase 1 regulatory subunit 29 (820 aa).

Residues 1-22 (MLRLGLCAAALLCVCRPGAVRA) form the signal peptide. Residues 23 to 397 (DCWLIEGDKG…APSTSTTTHY (375 aa)) lie on the Extracellular side of the membrane. Residue Asn-54 is glycosylated (N-linked (GlcNAc...) asparagine). LRR repeat units lie at residues 56-77 (TVHD…SLNR), 80-101 (NLTD…AFLG), 104-125 (SLQV…MLRG), 128-149 (RLQF…AFSE), and 152-173 (SLIS…TFAS). N-linked (GlcNAc...) asparagine glycosylation is found at Asn-80, Asn-85, and Asn-117. Residues 185 to 247 (NPFNCECDLF…ITVLQAKCRN (63 aa)) form the LRRCT domain. Asn-205 and Asn-247 each carry an N-linked (GlcNAc...) asparagine glycan. Residues 250-294 (LPARPVSHPTPYSTDAQREPDENSGFNPDEILSVEPPASSTTDAS) are disordered. The Fibronectin type-III domain maps to 292-379 (DASAGPAIKL…FNHTCLTFTT (88 aa)). Residues 398–418 (IMTILGCLFGMVIVLGAVYYC) form a helical membrane-spanning segment. Residues 419–820 (LRKRRMQEEK…WKGVSAQQKL (402 aa)) lie on the Cytoplasmic side of the membrane. Disordered regions lie at residues 508–527 (GAGG…LENG) and 589–612 (SATG…SSHH). Phosphoserine is present on residues Ser-619, Ser-668, and Ser-672. A disordered region spans residues 654 to 677 (TGLAKGDSKYIEKGSPLNSPLDRL).

Interacts with PPP1CA.

The protein localises to the membrane. Inhibits phosphatase activity of protein phosphatase 1 (PP1) complexes. This chain is Protein phosphatase 1 regulatory subunit 29 (ELFN2), found in Homo sapiens (Human).